Here is a 700-residue protein sequence, read N- to C-terminus: Polyribonucleotide nucleotidyltransferase (700 aa).

Positions 487 and 493 each coordinate Mg(2+). In terms of domain architecture, KH spans 554 to 613 (PRLLTIKIHPDKIRDVIGKGGSTIQAITKDTGTQIDIQDDGTIVIASVNNAAAREAKRRI). Positions 623–691 (GRIYEGKVAK…KQGRIRLSIK (69 aa)) constitute an S1 motif domain.

It belongs to the polyribonucleotide nucleotidyltransferase family. Component of the RNA degradosome, which is a multiprotein complex involved in RNA processing and mRNA degradation. Requires Mg(2+) as cofactor.

The protein resides in the cytoplasm. The catalysed reaction is RNA(n+1) + phosphate = RNA(n) + a ribonucleoside 5'-diphosphate. Involved in mRNA degradation. Catalyzes the phosphorolysis of single-stranded polyribonucleotides processively in the 3'- to 5'-direction. This is Polyribonucleotide nucleotidyltransferase from Xylella fastidiosa (strain M12).